The primary structure comprises 115 residues: Rubredoxin (115 aa).

In terms of domain architecture, Rubredoxin-like spans 15 to 66 (SPNHECRACGYVYIPSQGDQKTSVSPGTPFEALPLNWKCPVCGAPRNYFIST). The Fe cation site is built by Cys-20, Cys-23, Cys-53, and Cys-56.

This sequence belongs to the rubredoxin family. Fe(3+) is required as a cofactor.

In terms of biological role, rubredoxin is a small nonheme, iron protein lacking acid-labile sulfide. Its single Fe, chelated to 4 Cys, functions as an electron acceptor and may also stabilize the conformation of the molecule. Could be involved in hydrogenase-linked redox processes. The polypeptide is Rubredoxin (rub) (Synechocystis sp. (strain ATCC 27184 / PCC 6803 / Kazusa)).